The chain runs to 98 residues: Protein S100-A13 (98 aa).

Residues 18 to 53 (STFFTFAGREGRKGSLNINEFKELATQQLPHLLKDV) enclose the EF-hand domain. 7 residues coordinate Ca(2+): Ser-32, Glu-37, Asp-64, Asn-66, Asp-68, Glu-70, and Glu-75. Ser-32 is subject to Phosphoserine.

It belongs to the S-100 family. Homodimer. Part of a copper-dependent multiprotein complex containing S100A13, FGF1 and SYT1. Interacts with FGF1 and SYT1. Interacts with IL1A.

The protein resides in the cytoplasm. Its subcellular location is the secreted. Its function is as follows. Plays a role in the export of proteins that lack a signal peptide and are secreted by an alternative pathway. Binds two calcium ions per subunit. Binds one copper ion. Binding of one copper ion does not interfere with calcium binding. Required for the copper-dependent stress-induced export of IL1A and FGF1. The calcium-free protein binds to lipid vesicles containing phosphatidylserine, but not to vesicles containing phosphatidylcholine. The sequence is that of Protein S100-A13 (S100a13) from Mus musculus (Mouse).